The primary structure comprises 333 residues: NADH-quinone oxidoreductase subunit H (333 aa).

8 consecutive transmembrane segments (helical) span residues 15–35 (FFIF…FVTY), 88–108 (FILA…VIPF), 117–137 (IGVG…GVLT), 159–179 (ISYE…TGSL), 191–211 (VWYI…AVAE), 241–261 (FFML…TVLF), 273–293 (FIPG…LFIW), and 313–333 (VLLP…ELFF).

The protein belongs to the complex I subunit 1 family. NDH-1 is composed of 14 different subunits. Subunits NuoA, H, J, K, L, M, N constitute the membrane sector of the complex.

Its subcellular location is the cell membrane. The enzyme catalyses a quinone + NADH + 5 H(+)(in) = a quinol + NAD(+) + 4 H(+)(out). In terms of biological role, NDH-1 shuttles electrons from NADH, via FMN and iron-sulfur (Fe-S) centers, to quinones in the respiratory chain. The immediate electron acceptor for the enzyme in this species is believed to be ubiquinone. Couples the redox reaction to proton translocation (for every two electrons transferred, four hydrogen ions are translocated across the cytoplasmic membrane), and thus conserves the redox energy in a proton gradient. This subunit may bind ubiquinone. The polypeptide is NADH-quinone oxidoreductase subunit H (Bacillus cytotoxicus (strain DSM 22905 / CIP 110041 / 391-98 / NVH 391-98)).